Reading from the N-terminus, the 288-residue chain is Probable endonuclease 4 (288 aa).

Zn(2+)-binding residues include histidine 75, histidine 115, glutamate 153, aspartate 187, histidine 190, histidine 224, aspartate 237, histidine 239, and glutamate 269.

This sequence belongs to the AP endonuclease 2 family. It depends on Zn(2+) as a cofactor.

It carries out the reaction Endonucleolytic cleavage to 5'-phosphooligonucleotide end-products.. Functionally, endonuclease IV plays a role in DNA repair. It cleaves phosphodiester bonds at apurinic or apyrimidinic (AP) sites, generating a 3'-hydroxyl group and a 5'-terminal sugar phosphate. This Chlamydia trachomatis serovar L2 (strain ATCC VR-902B / DSM 19102 / 434/Bu) protein is Probable endonuclease 4.